The primary structure comprises 700 residues: Elongation factor G (700 aa).

Residues 8–290 (ERYRNIGISA…AVIDYLPSPV (283 aa)) form the tr-type G domain. Residues 17–24 (AHIDAGKT), 88–92 (DTPGH), and 142–145 (NKMD) each bind GTP.

Belongs to the TRAFAC class translation factor GTPase superfamily. Classic translation factor GTPase family. EF-G/EF-2 subfamily.

The protein resides in the cytoplasm. Catalyzes the GTP-dependent ribosomal translocation step during translation elongation. During this step, the ribosome changes from the pre-translocational (PRE) to the post-translocational (POST) state as the newly formed A-site-bound peptidyl-tRNA and P-site-bound deacylated tRNA move to the P and E sites, respectively. Catalyzes the coordinated movement of the two tRNA molecules, the mRNA and conformational changes in the ribosome. This is Elongation factor G from Leptothrix cholodnii (strain ATCC 51168 / LMG 8142 / SP-6) (Leptothrix discophora (strain SP-6)).